The chain runs to 85 residues: MEGLSITKLLVVGILIVLLFGTSKLRTLGADLGAALKGFKKAMRNDDEVSTSVLGETKMSAETKTVAETKAASDSQAAASVERKD.

A helical membrane pass occupies residues 1–21; sequence MEGLSITKLLVVGILIVLLFG. The segment at 64–85 is disordered; that stretch reads KTVAETKAASDSQAAASVERKD.

It belongs to the TatA/E family. TatE subfamily.

It localises to the cell inner membrane. Part of the twin-arginine translocation (Tat) system that transports large folded proteins containing a characteristic twin-arginine motif in their signal peptide across membranes. TatE shares overlapping functions with TatA. The sequence is that of Probable Sec-independent protein translocase protein TatE from Yersinia pestis.